The primary structure comprises 351 residues: Probable cobalt-factor III C(17)-methyltransferase (351 aa).

It belongs to the precorrin methyltransferase family.

It carries out the reaction Co(II)-factor III + S-adenosyl-L-methionine + H(+) = Co(II)-factor IV + S-adenosyl-L-homocysteine. It participates in cofactor biosynthesis; adenosylcobalamin biosynthesis; cob(II)yrinate a,c-diamide from sirohydrochlorin (anaerobic route): step 3/10. In terms of biological role, methyltransferase that likely catalyzes the ring contraction and methylation of C-17 in cobalt-factor III to form cobalt-factor IV. May also convert cobalt-precorrin-3 to cobalt-precorrin-4. The protein is Probable cobalt-factor III C(17)-methyltransferase (cbiH) of Methanothermobacter thermautotrophicus (strain ATCC 29096 / DSM 1053 / JCM 10044 / NBRC 100330 / Delta H) (Methanobacterium thermoautotrophicum).